We begin with the raw amino-acid sequence, 530 residues long: Poly(U)-binding-splicing factor PUF60 (530 aa).

The interval 1-487 (MATATIALGT…EDAEIIVKIF (487 aa)) is inhibits homodimerization. K14 participates in a covalent cross-link: Glycyl lysine isopeptide (Lys-Gly) (interchain with G-Cter in SUMO2). The residue at position 31 (T31) is a Phosphothreonine. The segment at 48 to 530 (QSIKSVLVKQ…ERFDNSDLSA (483 aa)) is inhibits transcriptional repression, interaction with ERCC3 and apoptosis induction. K51 participates in a covalent cross-link: Glycyl lysine isopeptide (Lys-Gly) (interchain with G-Cter in SUMO2). At S83 the chain carries Phosphoserine. RRM domains follow at residues 100–178 (CRVY…RPSN) and 197–275 (NRIY…KAVT). S215 carries the phosphoserine modification. N6-acetyllysine is present on K222. Phosphothreonine is present on T285. The segment at 387 to 408 (KKEKEEEELFPESERPEMLSEQ) is disordered. Residue K390 forms a Glycyl lysine isopeptide (Lys-Gly) (interchain with G-Cter in SUMO2) linkage. Residues 398 to 408 (ESERPEMLSEQ) show a composition bias toward basic and acidic residues. K425 is subject to N6-acetyllysine. Residue K429 forms a Glycyl lysine isopeptide (Lys-Gly) (interchain with G-Cter in SUMO2) linkage. Residues 433 to 520 (TVMVLRNMVD…RKVVAEVYDQ (88 aa)) form the RRM 3; atypical domain.

The protein belongs to the RRM half pint family. Homodimer. Associates with the spliceosome. Found in a complex with RO60 and Y5 RNA. Found in a complex with FUBP1 and far upstream element (FUSE) DNA segment. Interacts directly with ERCC3. Interacts with CDK7 and GTF2H1. Interacts with SRSF11/P54. Interacts with ARGLU1; interaction may be involved in ARGLU1-mediated modulation of alternative splicing.

It localises to the nucleus. Its function is as follows. DNA- and RNA-binding protein, involved in several nuclear processes such as pre-mRNA splicing, apoptosis and transcription regulation. In association with FUBP1 regulates MYC transcription at the P2 promoter through the core-TFIIH basal transcription factor. Acts as a transcriptional repressor through the core-TFIIH basal transcription factor. Represses FUBP1-induced transcriptional activation but not basal transcription. Decreases ERCC3 helicase activity. Is also involved in pre-mRNA splicing. Promotes splicing of an intron with weak 3'-splice site and pyrimidine tract in a cooperative manner with U2AF2. Involved in apoptosis induction when overexpressed in HeLa cells. Modulates alternative splicing of several mRNAs. Binds to relaxed DNA of active promoter regions. Binds to the pyrimidine tract and 3'-splice site regions of pre-mRNA; binding is enhanced in presence of U2AF2. Binds to Y5 RNA in association with RO60. Binds to poly(U) RNA. This is Poly(U)-binding-splicing factor PUF60 from Bos taurus (Bovine).